A 217-amino-acid chain; its full sequence is Large ribosomal subunit protein uL16 (217 aa).

The protein belongs to the universal ribosomal protein uL16 family. In terms of assembly, component of the small ribosomal subunit. Mature ribosomes consist of a small (40S) and a large (60S) subunit. The 40S subunit contains about 33 different proteins and 1 molecule of RNA (18S). The 60S subunit contains about 49 different proteins and 3 molecules of RNA (25S, 5.8S and 5S).

This Dictyostelium discoideum (Social amoeba) protein is Large ribosomal subunit protein uL16 (rpl10).